The chain runs to 92 residues: Small ribosomal subunit protein uS19 (92 aa).

Belongs to the universal ribosomal protein uS19 family.

Functionally, protein S19 forms a complex with S13 that binds strongly to the 16S ribosomal RNA. The protein is Small ribosomal subunit protein uS19 of Treponema denticola (strain ATCC 35405 / DSM 14222 / CIP 103919 / JCM 8153 / KCTC 15104).